The primary structure comprises 116 residues: Large ribosomal subunit protein bL17 (116 aa).

This sequence belongs to the bacterial ribosomal protein bL17 family. Part of the 50S ribosomal subunit. Contacts protein L32.

In Synechococcus sp. (strain JA-3-3Ab) (Cyanobacteria bacterium Yellowstone A-Prime), this protein is Large ribosomal subunit protein bL17.